The sequence spans 257 residues: MTFTVLIPARLASTRLPNKPLADIGGAPMVVRVAQRVLSGAGLAGRVRVVVAGDSPLIIEACQVHGIEAVLTRTDHPSGSDRLAEACDLLRLGDDEIVVNVQGDEPLIDPSLVAAVAGLLLNQPAASMSTAAHAINSEAEFNNRNVVKVVLDAQGLALYFSRAPIPCWRDQPLSANDSAALPSPPPLRHIGLYAYRVGFLRRFPTLAQAPIEITESLEQLRALWHGYRIAVHIAPHAPGPGVDTPEDLERVRHLFGA.

Belongs to the KdsB family.

The protein resides in the cytoplasm. The catalysed reaction is 3-deoxy-alpha-D-manno-oct-2-ulosonate + CTP = CMP-3-deoxy-beta-D-manno-octulosonate + diphosphate. It participates in nucleotide-sugar biosynthesis; CMP-3-deoxy-D-manno-octulosonate biosynthesis; CMP-3-deoxy-D-manno-octulosonate from 3-deoxy-D-manno-octulosonate and CTP: step 1/1. The protein operates within bacterial outer membrane biogenesis; lipopolysaccharide biosynthesis. Functionally, activates KDO (a required 8-carbon sugar) for incorporation into bacterial lipopolysaccharide in Gram-negative bacteria. This is 3-deoxy-manno-octulosonate cytidylyltransferase from Albidiferax ferrireducens (strain ATCC BAA-621 / DSM 15236 / T118) (Rhodoferax ferrireducens).